Reading from the N-terminus, the 115-residue chain is UPF0102 protein NGO_1987 (115 aa).

It belongs to the UPF0102 family.

In Neisseria gonorrhoeae (strain ATCC 700825 / FA 1090), this protein is UPF0102 protein NGO_1987.